The sequence spans 420 residues: Polymerase delta-interacting protein 3 (420 aa).

N-acetylalanine is present on A2. The residue at position 5 (S5) is a Phosphoserine. R33 carries the post-translational modification Omega-N-methylarginine. S127 is subject to Phosphoserine. Position 140 is a phosphothreonine (T140). Residue K200 forms a Glycyl lysine isopeptide (Lys-Gly) (interchain with G-Cter in SUMO2) linkage. 2 positions are modified to phosphoserine: S215 and S217. Residue K223 forms a Glycyl lysine isopeptide (Lys-Gly) (interchain with G-Cter in SUMO2) linkage. S244 is modified (phosphoserine). Residue K248 forms a Glycyl lysine isopeptide (Lys-Gly) (interchain with G-Cter in SUMO2) linkage. A disordered region spans residues 256–277; that stretch reads TLVNKEEPPKELPPAEPVLSPL. S275 bears the Phosphoserine mark. One can recognise an RRM domain in the interval 280–351; that stretch reads TKMTVNNLHP…QPMKCNLHMN (72 aa). The tract at residues 369 to 394 is disordered; it reads PSVKKESELPRRGNPASSNPPAEVDP. Residues 370 to 379 show a composition bias toward basic and acidic residues; it reads SVKKESELPR. Residue K372 forms a Glycyl lysine isopeptide (Lys-Gly) (interchain with G-Cter in SUMO2) linkage. S385 carries the post-translational modification Phosphoserine. Residue K417 forms a Glycyl lysine isopeptide (Lys-Gly) (interchain with G-Cter in SUMO2) linkage.

In terms of assembly, interacts with POLD2. Interacts with NCBP1 and EIF4A3. Associates with the multiprotein exon junction complex (EJC). Interacts with RPS6KB1 (activated). Interacts with ERH. Interacts with THOC2, DDX39B and ZC3H11A; the interactions are ATP-dependent and indicative for an association with the TREX complex.

The protein localises to the nucleus. The protein resides in the nucleus speckle. Its subcellular location is the cytoplasm. In terms of biological role, is involved in regulation of translation. Is preferentially associated with CBC-bound spliced mRNA-protein complexes during the pioneer round of mRNA translation. Contributes to enhanced translational efficiency of spliced over nonspliced mRNAs. Recruits activated ribosomal protein S6 kinase beta-1 I/RPS6KB1 to newly synthesized mRNA. Involved in nuclear mRNA export; probably mediated by association with the TREX complex. In Mus musculus (Mouse), this protein is Polymerase delta-interacting protein 3 (Poldip3).